Here is an 81-residue protein sequence, read N- to C-terminus: uncharacterized protein (81 aa).

This is an uncharacterized protein from Synechocystis sp. (strain ATCC 27184 / PCC 6803 / Kazusa).